A 473-amino-acid polypeptide reads, in one-letter code: 3-isopropylmalate dehydratase large subunit (473 aa).

Cys-354, Cys-414, and Cys-417 together coordinate [4Fe-4S] cluster. A disordered region spans residues 425–448 (LAPGQRSASTSNRNFEGRQGRGGR).

This sequence belongs to the aconitase/IPM isomerase family. LeuC type 1 subfamily. Heterodimer of LeuC and LeuD. It depends on [4Fe-4S] cluster as a cofactor.

The catalysed reaction is (2R,3S)-3-isopropylmalate = (2S)-2-isopropylmalate. Its pathway is amino-acid biosynthesis; L-leucine biosynthesis; L-leucine from 3-methyl-2-oxobutanoate: step 2/4. Its function is as follows. Catalyzes the isomerization between 2-isopropylmalate and 3-isopropylmalate, via the formation of 2-isopropylmaleate. The chain is 3-isopropylmalate dehydratase large subunit from Acidothermus cellulolyticus (strain ATCC 43068 / DSM 8971 / 11B).